A 517-amino-acid chain; its full sequence is 2-isopropylmalate synthase (517 aa).

A Pyruvate carboxyltransferase domain is found at valine 7–valine 269. Positions 16, 204, 206, and 240 each coordinate Mn(2+). A regulatory domain region spans residues lysine 395–isoleucine 517.

It belongs to the alpha-IPM synthase/homocitrate synthase family. LeuA type 1 subfamily. In terms of assembly, homodimer. Requires Mn(2+) as cofactor.

The protein resides in the cytoplasm. The enzyme catalyses 3-methyl-2-oxobutanoate + acetyl-CoA + H2O = (2S)-2-isopropylmalate + CoA + H(+). The protein operates within amino-acid biosynthesis; L-leucine biosynthesis; L-leucine from 3-methyl-2-oxobutanoate: step 1/4. Functionally, catalyzes the condensation of the acetyl group of acetyl-CoA with 3-methyl-2-oxobutanoate (2-ketoisovalerate) to form 3-carboxy-3-hydroxy-4-methylpentanoate (2-isopropylmalate). This chain is 2-isopropylmalate synthase, found in Neisseria meningitidis serogroup A / serotype 4A (strain DSM 15465 / Z2491).